The chain runs to 432 residues: Probable protein phosphatase 2C 33 (432 aa).

The region spanning 27 to 298 (GGGSERPLVR…DDTTCVVVDI (272 aa)) is the PPM-type phosphatase domain. 4 residues coordinate Mn(2+): D74, G75, D250, and D289.

The protein belongs to the PP2C family. The cofactor is Mg(2+). Requires Mn(2+) as cofactor.

It catalyses the reaction O-phospho-L-seryl-[protein] + H2O = L-seryl-[protein] + phosphate. It carries out the reaction O-phospho-L-threonyl-[protein] + H2O = L-threonyl-[protein] + phosphate. This Oryza sativa subsp. japonica (Rice) protein is Probable protein phosphatase 2C 33.